The following is a 257-amino-acid chain: UPF0246 protein BPP3440 (257 aa).

It belongs to the UPF0246 family.

The sequence is that of UPF0246 protein BPP3440 from Bordetella parapertussis (strain 12822 / ATCC BAA-587 / NCTC 13253).